The sequence spans 205 residues: Basigin (205 aa).

Residues Met1 to Gly18 form the signal peptide. An Ig-like C2-type domain is found at Ala19–Gly103. At Ala19–His205 the chain is on the extracellular side. Intrachain disulfides connect Cys41–Cys87 and Cys126–Cys185. Residues Asn44, Asn152, and Asn186 are each glycosylated (N-linked (GlcNAc...) asparagine). The Ig-like V-type domain occupies Pro105–Thr199.

As to quaternary structure, homooligomer. Interacts with VEGFA, KDR/VEGFR2, PPIA/CYPA, SLC16A12, SLC16A11, ATP1B2, MAG, L1CAM and AJAP1. Interacts with SLC16A1; interaction mediates SLC16A1 targeting to the plasma membrane. Interacts with SLC16A3; interaction mediates SLC16A3 targeting to the plasma membrane. Interacts with PPIL2; regulates BSG transport to the cell membrane. Interacts with XKR8; promoting its localization at the cell membrane. Interacts with SLC16A6; this interaction mediates targeting to the plasma membrane.

It localises to the cell membrane. It is found in the endoplasmic reticulum membrane. The protein resides in the basolateral cell membrane. Functionally, signaling receptor for cyclophilins, essential for PPIA/CYPA and PPIB/CYPB-dependent signaling related to chemotaxis and adhesion of immune cells. Plays an important role in targeting the monocarboxylate transporters SLC16A1/GLUT1, SLC16A3, SLC16A8, SLC16A11 and SLC16A12 to the plasma membrane. Acts as a coreceptor for vascular endothelial growth factor receptor 2 (KDR/VEGFR2) in endothelial cells enhancing its VEGFA-mediated activation and downstream signaling. Promotes angiogenesis through EPAS1/HIF2A-mediated up-regulation of VEGFA and KDR/VEGFR2 in endothelial cells. This Bos taurus (Bovine) protein is Basigin (BSG).